The primary structure comprises 184 residues: Intraflagellar transport protein 22 homolog (184 aa).

GTP-binding positions include 10–17, 62–66, and 122–125; these read GPTESGKT, DCGGD, and KKPG.

Belongs to the small GTPase superfamily. Rab family.

This is Intraflagellar transport protein 22 homolog (ift22) from Xenopus tropicalis (Western clawed frog).